A 431-amino-acid chain; its full sequence is Enolase (431 aa).

Q167 provides a ligand contact to (2R)-2-phosphoglycerate. Residue E209 is the Proton donor of the active site. Positions 246, 290, and 317 each coordinate Mg(2+). (2R)-2-phosphoglycerate-binding residues include K342, R371, S372, and K393. Residue K342 is the Proton acceptor of the active site.

Belongs to the enolase family. As to quaternary structure, component of the RNA degradosome, a multiprotein complex involved in RNA processing and mRNA degradation. The cofactor is Mg(2+).

It is found in the cytoplasm. It localises to the secreted. Its subcellular location is the cell surface. It catalyses the reaction (2R)-2-phosphoglycerate = phosphoenolpyruvate + H2O. Its pathway is carbohydrate degradation; glycolysis; pyruvate from D-glyceraldehyde 3-phosphate: step 4/5. Its function is as follows. Catalyzes the reversible conversion of 2-phosphoglycerate (2-PG) into phosphoenolpyruvate (PEP). It is essential for the degradation of carbohydrates via glycolysis. The protein is Enolase of Erwinia tasmaniensis (strain DSM 17950 / CFBP 7177 / CIP 109463 / NCPPB 4357 / Et1/99).